Consider the following 146-residue polypeptide: Hemoglobin subunit beta-2 (146 aa).

The Globin domain occupies Lys2–Cys146. Heme b contacts are provided by His63 and His92.

This sequence belongs to the globin family. In terms of assembly, heterotetramer of two alpha chains and two beta chains. As to expression, red blood cells.

Involved in oxygen transport from gills to the various peripheral tissues. This Lycodes reticulatus (Arctic eelpout) protein is Hemoglobin subunit beta-2 (hbb2).